A 130-amino-acid chain; its full sequence is MGYGWALFSVALVSAAQLLLKWVMMHLPPLGALRLWLDPAYAEPLALLMGGLLAYVCSMGCWFMALRRLPLNKAYPLLSLSYVLVAACALMIPEFNERFTFSRLMGVALICGGLLLICLPAGGKGDTPRR.

Residues 1–4 are Cytoplasmic-facing; that stretch reads MGYG. The chain crosses the membrane as a helical span at residues 5 to 25; the sequence is WALFSVALVSAAQLLLKWVMM. Residues 26–44 are Periplasmic-facing; that stretch reads HLPPLGALRLWLDPAYAEP. A helical transmembrane segment spans residues 45–65; the sequence is LALLMGGLLAYVCSMGCWFMA. Over 66 to 74 the chain is Cytoplasmic; it reads LRRLPLNKA. The chain crosses the membrane as a helical span at residues 75–95; sequence YPLLSLSYVLVAACALMIPEF. The Periplasmic segment spans residues 96–103; sequence NERFTFSR. Residues 104 to 124 traverse the membrane as a helical segment; it reads LMGVALICGGLLLICLPAGGK. Residues 125–130 are Cytoplasmic-facing; it reads GDTPRR.

This sequence belongs to the ArnF family. Heterodimer of ArnE and ArnF.

The protein localises to the cell inner membrane. It participates in bacterial outer membrane biogenesis; lipopolysaccharide biosynthesis. Its function is as follows. Translocates 4-amino-4-deoxy-L-arabinose-phosphoundecaprenol (alpha-L-Ara4N-phosphoundecaprenol) from the cytoplasmic to the periplasmic side of the inner membrane. The protein is Probable 4-amino-4-deoxy-L-arabinose-phosphoundecaprenol flippase subunit ArnF of Sodalis glossinidius (strain morsitans).